We begin with the raw amino-acid sequence, 1377 residues long: DNA-directed RNA polymerase subunit beta' (1377 aa).

Cys-60, Cys-62, Cys-75, and Cys-78 together coordinate Zn(2+). Mg(2+) is bound by residues Asp-449, Asp-451, and Asp-453. Zn(2+) contacts are provided by Cys-777, Cys-851, Cys-858, and Cys-861.

It belongs to the RNA polymerase beta' chain family. As to quaternary structure, the RNAP catalytic core consists of 2 alpha, 1 beta, 1 beta' and 1 omega subunit. When a sigma factor is associated with the core the holoenzyme is formed, which can initiate transcription. Mg(2+) serves as cofactor. Zn(2+) is required as a cofactor.

It catalyses the reaction RNA(n) + a ribonucleoside 5'-triphosphate = RNA(n+1) + diphosphate. DNA-dependent RNA polymerase catalyzes the transcription of DNA into RNA using the four ribonucleoside triphosphates as substrates. This chain is DNA-directed RNA polymerase subunit beta', found in Borreliella burgdorferi (strain ZS7) (Borrelia burgdorferi).